Here is a 299-residue protein sequence, read N- to C-terminus: Bifunctional protein FolD 2 (299 aa).

Residues 168 to 170 (GRS), Ser193, and Ile234 contribute to the NADP(+) site.

This sequence belongs to the tetrahydrofolate dehydrogenase/cyclohydrolase family. As to quaternary structure, homodimer.

It carries out the reaction (6R)-5,10-methylene-5,6,7,8-tetrahydrofolate + NADP(+) = (6R)-5,10-methenyltetrahydrofolate + NADPH. The catalysed reaction is (6R)-5,10-methenyltetrahydrofolate + H2O = (6R)-10-formyltetrahydrofolate + H(+). It participates in one-carbon metabolism; tetrahydrofolate interconversion. In terms of biological role, catalyzes the oxidation of 5,10-methylenetetrahydrofolate to 5,10-methenyltetrahydrofolate and then the hydrolysis of 5,10-methenyltetrahydrofolate to 10-formyltetrahydrofolate. This Rhizobium meliloti (strain 1021) (Ensifer meliloti) protein is Bifunctional protein FolD 2.